A 647-amino-acid polypeptide reads, in one-letter code: Protein arginine N-methyltransferase 7 (647 aa).

SAM-dependent MTase PRMT-type domains are found at residues 12 to 332 (EREW…FSLW) and 337 to 647 (GKDK…SEDS). Catalysis depends on residues Glu-140 and Glu-149.

The protein belongs to the class I-like SAM-binding methyltransferase superfamily. Protein arginine N-methyltransferase family. PRMT7 subfamily.

Arginine methyltransferase that can both catalyze the formation of omega-N monomethylarginine (MMA) and symmetrical dimethylarginine (sDMA). The sequence is that of Protein arginine N-methyltransferase 7 (prmt-7) from Caenorhabditis elegans.